Reading from the N-terminus, the 441-residue chain is Interferon-related developmental regulator 2 (441 aa).

The segment covering 1–15 has biased composition (basic residues); it reads MPRARKGNTPRKGGQ. The disordered stretch occupies residues 1 to 72; it reads MPRARKGNTP…TVDEQGPQED (72 aa). Acidic residues predominate over residues 63–72; it reads TVDEQGPQED.

Belongs to the IFRD family. In terms of assembly, associates with ribosomes; promoting ribosome inactivation.

Ribosome-binding protein that acts as an inhibitor of mRNA translation by promoting ribosome inactivation. Associates with the P- and E-sites of the ribosome and inserts a C-terminal helix into the mRNA exit channel to preclude translation. The chain is Interferon-related developmental regulator 2 from Oryctolagus cuniculus (Rabbit).